Here is a 211-residue protein sequence, read N- to C-terminus: Uracil phosphoribosyltransferase (211 aa).

Residues R78, R103, and 130 to 138 contribute to the 5-phospho-alpha-D-ribose 1-diphosphate site; that span reads DPMLATGGS. Residues I193 and 198 to 200 each bind uracil; that span reads GDA. Residue D199 participates in 5-phospho-alpha-D-ribose 1-diphosphate binding.

This sequence belongs to the UPRTase family. It depends on Mg(2+) as a cofactor.

It carries out the reaction UMP + diphosphate = 5-phospho-alpha-D-ribose 1-diphosphate + uracil. It participates in pyrimidine metabolism; UMP biosynthesis via salvage pathway; UMP from uracil: step 1/1. With respect to regulation, allosterically activated by GTP. In terms of biological role, catalyzes the conversion of uracil and 5-phospho-alpha-D-ribose 1-diphosphate (PRPP) to UMP and diphosphate. The chain is Uracil phosphoribosyltransferase from Hahella chejuensis (strain KCTC 2396).